The primary structure comprises 291 residues: ATP synthase gamma chain (291 aa).

Belongs to the ATPase gamma chain family. F-type ATPases have 2 components, CF(1) - the catalytic core - and CF(0) - the membrane proton channel. CF(1) has five subunits: alpha(3), beta(3), gamma(1), delta(1), epsilon(1). CF(0) has three main subunits: a, b and c.

It localises to the cell inner membrane. Produces ATP from ADP in the presence of a proton gradient across the membrane. The gamma chain is believed to be important in regulating ATPase activity and the flow of protons through the CF(0) complex. This is ATP synthase gamma chain from Rhodopseudomonas palustris (strain HaA2).